The primary structure comprises 784 residues: Lon protease (784 aa).

One can recognise a Lon N-terminal domain in the interval 6 to 207 (LPLMALRDMV…TVITTLTSNI (202 aa)). 356 to 363 (GPPGVGKT) contributes to the ATP binding site. In terms of domain architecture, Lon proteolytic spans 592 to 773 (EDQIGSTTGL…DQVLKHALVE (182 aa)). Catalysis depends on residues S679 and K722.

It belongs to the peptidase S16 family. Homohexamer. Organized in a ring with a central cavity.

Its subcellular location is the cytoplasm. The catalysed reaction is Hydrolysis of proteins in presence of ATP.. Functionally, ATP-dependent serine protease that mediates the selective degradation of mutant and abnormal proteins as well as certain short-lived regulatory proteins. Required for cellular homeostasis and for survival from DNA damage and developmental changes induced by stress. Degrades polypeptides processively to yield small peptide fragments that are 5 to 10 amino acids long. Binds to DNA in a double-stranded, site-specific manner. This Rickettsia typhi (strain ATCC VR-144 / Wilmington) protein is Lon protease.